The following is a 305-amino-acid chain: Autophagy-related protein 27 (305 aa).

An N-terminal signal peptide occupies residues 1-22; the sequence is MARYKGLSILSLFAVFSSLASA. The Lumenal segment spans residues 23 to 242; the sequence is ELDCSNIKVD…EDGGSAPSGH (220 aa). In terms of domain architecture, MRH spans 24 to 231; it reads LDCSNIKVDG…EWKTKYACEN (208 aa). Intrachain disulfides connect Cys26-Cys66 and Cys74-Cys81. The N-linked (GlcNAc...) asparagine glycan is linked to Asn58. Residue Asn85 is glycosylated (N-linked (GlcNAc...) asparagine). Cys156 and Cys229 form a disulfide bridge. The segment at 163 to 202 is disordered; it reads LEGLESPKPDGDKKKDGEKKDDDKKDNKDKEGKSKRDGEE. The helical transmembrane segment at 243–263 threads the bilayer; it reads WGFFTWVIVLYVVLVSLPLLS. At 264-305 the chain is on the cytoplasmic side; the sequence is ERVTNVRCHSQPVPVHFGLSDIRLVAQLQPVWSSRVGLASSQ.

It belongs to the ATG27 family.

Its subcellular location is the cytoplasmic vesicle membrane. It is found in the golgi apparatus membrane. The protein resides in the mitochondrion membrane. The protein localises to the preautophagosomal structure membrane. Functionally, effector of phosphatidylinositol 3-phosphate kinase signaling. Regulates the cytoplasm to vacuole transport (Cvt) vesicle formation. Plays a role in ATG protein retrieval from the pre-autophagosomal structure (PAS). The sequence is that of Autophagy-related protein 27 from Arthroderma benhamiae (strain ATCC MYA-4681 / CBS 112371) (Trichophyton mentagrophytes).